The sequence spans 374 residues: Glycerophosphodiester phosphodiesterase GDPD2 (374 aa).

A GP-PDE domain is found at 38–326 (FSVIGHRGIG…DFVEEIIEST (289 aa)). Residues 330–349 (MIRPPPSSSPLPSPSKDDDV) are disordered. Positions 332–342 (RPPPSSSPLPS) are enriched in pro residues.

Belongs to the glycerophosphoryl diester phosphodiesterase family. Expressed in roots, shoots, flowers and siliques.

It carries out the reaction a sn-glycero-3-phosphodiester + H2O = an alcohol + sn-glycerol 3-phosphate + H(+). In Arabidopsis thaliana (Mouse-ear cress), this protein is Glycerophosphodiester phosphodiesterase GDPD2.